A 142-amino-acid polypeptide reads, in one-letter code: Large ribosomal subunit protein uL11 (142 aa).

The protein belongs to the universal ribosomal protein uL11 family. As to quaternary structure, part of the ribosomal stalk of the 50S ribosomal subunit. Interacts with L10 and the large rRNA to form the base of the stalk. L10 forms an elongated spine to which L12 dimers bind in a sequential fashion forming a multimeric L10(L12)X complex. Post-translationally, one or more lysine residues are methylated.

Its function is as follows. Forms part of the ribosomal stalk which helps the ribosome interact with GTP-bound translation factors. This is Large ribosomal subunit protein uL11 from Desulfitobacterium hafniense (strain DSM 10664 / DCB-2).